We begin with the raw amino-acid sequence, 94 residues long: Small ribosomal subunit protein bS18 (94 aa).

This sequence belongs to the bacterial ribosomal protein bS18 family. As to quaternary structure, part of the 30S ribosomal subunit. Forms a tight heterodimer with protein bS6.

Functionally, binds as a heterodimer with protein bS6 to the central domain of the 16S rRNA, where it helps stabilize the platform of the 30S subunit. The sequence is that of Small ribosomal subunit protein bS18 from Polaromonas naphthalenivorans (strain CJ2).